Reading from the N-terminus, the 232-residue chain is uncharacterized protein (232 aa).

The protein resides in the cytoplasm. It localises to the nucleus. This is an uncharacterized protein from Saccharomyces cerevisiae (strain ATCC 204508 / S288c) (Baker's yeast).